A 297-amino-acid chain; its full sequence is ClpXP adapter protein SpxH (297 aa).

This sequence belongs to the SpxH family. Interacts with Spx.

It localises to the cytoplasm. Its function is as follows. Adapter protein required for efficient degradation of Spx by ClpXP under non-stress conditions. Interaction with Spx stabilizes Spx and exposes the C-terminus of Spx for recognition and proteolysis by ClpXP. This Bacillus cereus (strain ZK / E33L) protein is ClpXP adapter protein SpxH.